Consider the following 90-residue polypeptide: Darcynin 1 (90 aa).

It belongs to the darcynin family.

This Acinetobacter baumannii (strain ATCC 17978 / DSM 105126 / CIP 53.77 / LMG 1025 / NCDC KC755 / 5377) protein is Darcynin 1.